Here is a 440-residue protein sequence, read N- to C-terminus: Thymidine phosphorylase (440 aa).

This sequence belongs to the thymidine/pyrimidine-nucleoside phosphorylase family. In terms of assembly, homodimer.

The enzyme catalyses thymidine + phosphate = 2-deoxy-alpha-D-ribose 1-phosphate + thymine. It functions in the pathway pyrimidine metabolism; dTMP biosynthesis via salvage pathway; dTMP from thymine: step 1/2. Its function is as follows. The enzymes which catalyze the reversible phosphorolysis of pyrimidine nucleosides are involved in the degradation of these compounds and in their utilization as carbon and energy sources, or in the rescue of pyrimidine bases for nucleotide synthesis. This Burkholderia pseudomallei (strain K96243) protein is Thymidine phosphorylase.